The following is a 124-amino-acid chain: Colorectal cancer-associated protein 1 (124 aa).

Residues 77–97 (LYGCFCVGLVSGMAISVLLLA) traverse the membrane as a helical segment.

In terms of tissue distribution, expressed in gastrointestinal and immune tissue, as well as prostate, testis and ovary. Expressed in lamina propria and eosinophils but not in epithelial cells. Expression is greater in benign adjacent tissues than in colon tumors.

It is found in the membrane. The sequence is that of Colorectal cancer-associated protein 1 (COLCA1) from Homo sapiens (Human).